We begin with the raw amino-acid sequence, 318 residues long: Cytochrome f (318 aa).

The signal sequence occupies residues 1–34 (MQNRNFFEYPKNWIILLIPIFTTFNLLFTSDCYA). The heme site is built by Phe35, Cys55, Cys58, and His59. The chain crosses the membrane as a helical span at residues 284-303 (LQGLLVFLFLVVLAQVFLVL).

This sequence belongs to the cytochrome f family. The 4 large subunits of the cytochrome b6-f complex are cytochrome b6, subunit IV (17 kDa polypeptide, petD), cytochrome f and the Rieske protein, while the 4 small subunits are PetG, PetL, PetM and PetN. The complex functions as a dimer. It depends on heme as a cofactor.

It is found in the plastid. The protein localises to the chloroplast thylakoid membrane. Its function is as follows. Component of the cytochrome b6-f complex, which mediates electron transfer between photosystem II (PSII) and photosystem I (PSI), cyclic electron flow around PSI, and state transitions. In Chaetosphaeridium globosum (Charophycean green alga), this protein is Cytochrome f.